We begin with the raw amino-acid sequence, 198 residues long: V-type ATP synthase subunit E (198 aa).

The protein belongs to the V-ATPase E subunit family.

Produces ATP from ADP in the presence of a proton gradient across the membrane. The protein is V-type ATP synthase subunit E of Clostridium perfringens (strain SM101 / Type A).